We begin with the raw amino-acid sequence, 263 residues long: Proline rich transmembrane protein 1B (263 aa).

The span at 1–17 (MEAGAGGAGSDTKGGGS) shows a compositional bias: gly residues. The disordered stretch occupies residues 1 to 107 (MEAGAGGAGS…IGFVGEPPPY (107 aa)). Low complexity-rich tracts occupy residues 37-47 (QMPAQPALPQL) and 75-86 (DAPAQAAGEAGP). 2 consecutive transmembrane segments (helical) span residues 190–210 (MMES…IAIV) and 238–258 (VLFS…YVVV).

This sequence belongs to the CD225/Dispanin family.

The protein localises to the membrane. The chain is Proline rich transmembrane protein 1B from Homo sapiens (Human).